The primary structure comprises 260 residues: MKSQSHKPWNLVAGIFFPIITFFLSAPLVGHALYLFCMRNDHVYYRDFQSTLPRVQTLVSVSLLALFLLSNIGMFLRPRRLSYFLVIVFFIGFAYSGVYKMESRRFSPTPMCFKGEYNNGQGERKTEQYQVVKIEQSQGRLQRVHLRFVNSYALPPYDRRLLPSVKTGCCNRPGNCKLETVNATLWVTRNREGPPLETAMIYDRYGGNADIKDYYDMWRHELSVLYYDCMTCQVRIIKSPRLRKWWQFGVFLSSLTSLFR.

Topologically, residues 1–10 (MKSQSHKPWN) are cytoplasmic. A helical transmembrane segment spans residues 11 to 31 (LVAGIFFPIITFFLSAPLVGH). At 32-54 (ALYLFCMRNDHVYYRDFQSTLPR) the chain is on the extracellular side. The chain crosses the membrane as a helical span at residues 55–75 (VQTLVSVSLLALFLLSNIGMF). Residues 76–80 (LRPRR) lie on the Cytoplasmic side of the membrane. A helical transmembrane segment spans residues 81–101 (LSYFLVIVFFIGFAYSGVYKM). At 102–260 (ESRRFSPTPM…FLSSLTSLFR (159 aa)) the chain is on the extracellular side. N-linked (GlcNAc...) asparagine glycosylation occurs at Asn182.

The protein belongs to the tetraspanin (TM4SF) family.

The protein resides in the membrane. Its function is as follows. May be involved in the regulation of cell differentiation. In Arabidopsis thaliana (Mouse-ear cress), this protein is Tetraspanin-14 (TET14).